The chain runs to 541 residues: Chaperonin GroEL (541 aa).

ATP-binding positions include threonine 29–proline 32, aspartate 86–threonine 90, glycine 413, asparagine 478–alanine 480, and aspartate 494.

This sequence belongs to the chaperonin (HSP60) family. As to quaternary structure, forms a cylinder of 14 subunits composed of two heptameric rings stacked back-to-back. Interacts with the co-chaperonin GroES.

The protein localises to the cytoplasm. The enzyme catalyses ATP + H2O + a folded polypeptide = ADP + phosphate + an unfolded polypeptide.. Functionally, together with its co-chaperonin GroES, plays an essential role in assisting protein folding. The GroEL-GroES system forms a nano-cage that allows encapsulation of the non-native substrate proteins and provides a physical environment optimized to promote and accelerate protein folding. In Agathobacter rectalis (strain ATCC 33656 / DSM 3377 / JCM 17463 / KCTC 5835 / VPI 0990) (Eubacterium rectale), this protein is Chaperonin GroEL.